The chain runs to 100 residues: Replication restart protein PriB (100 aa).

The SSB domain occupies 1-100 (MTNRMELSGT…VLHADNITQI (100 aa)).

Belongs to the PriB family. In terms of assembly, homodimer. Interacts with PriA and DnaT. Component of the replication restart primosome. Primosome assembly occurs via a 'hand-off' mechanism. PriA binds to replication forks, subsequently PriB then DnaT bind; DnaT then displaces ssDNA to generate the helicase loading substrate.

In terms of biological role, involved in the restart of stalled replication forks, which reloads the replicative helicase on sites other than the origin of replication; the PriA-PriB pathway is the major replication restart pathway. During primosome assembly it facilitates complex formation between PriA and DnaT on DNA; stabilizes PriA on DNA. Stimulates the DNA unwinding activity of PriA helicase. The chain is Replication restart protein PriB from Vibrio parahaemolyticus serotype O3:K6 (strain RIMD 2210633).